The primary structure comprises 391 residues: Steroid side-chain-cleaving aldolase (391 aa).

The active-site Proton acceptor is the Y294. Residue Y344 is the Proton donor of the active site.

This sequence belongs to the thiolase-like superfamily. In terms of assembly, homodimer. Interacts with the ChsH1/ChsH2 hydratase via the DUF35 C-terminal region of ChsH2 (ChsH2-DUF35).

It catalyses the reaction 17-hydroxy-3-oxochol-4-en-22-oyl-CoA = androst-4-ene-3,17-dione + propanoyl-CoA. In terms of biological role, probably involved in bile acid degradation. In vitro, when associated with the ChsH1/ChsH2 hydratase, catalyzes the retroaldol cleavage of 17-hydroxy-3-oxo-4-pregnene-20-carboxyl-CoA (17-HOPC-CoA), forming androst-4-ene-3,17-dione and propionyl-CoA. The in vivo substrate is probably a closely analogous bile acid degradation metabolite. This chain is Steroid side-chain-cleaving aldolase, found in Thermomonospora curvata (strain ATCC 19995 / DSM 43183 / JCM 3096 / KCTC 9072 / NBRC 15933 / NCIMB 10081 / Henssen B9).